The following is an 874-amino-acid chain: MTVPNVLAKALYDNVAESPDELSFRKGDIMTVLERDTQGLDGWWLCSLHGRQGIVPGNRLKILVGMYDKKPVGPGPGPPATPPQPQPSLPQGVHAPVPPASQYSPMLPTAYQPQSDNVYLVPTPSKTQQGLYQAPGPNPQFQSPPAKQTSTFSKQTPHHSFPSPATDLYQVPPGPGSPAQDIYQVPPSAGIGHDIYQVPPSLDTRGWEGTKPPAKVVVPTRVGQGYVYEAAQTEQDEYDTPRHLLAPGPQDIYDVPPVRGLLPNQYGQEVYDTPPMAVKGPNGRDPLLDVYDVPPSVEKGLLSSSHHSVYDVPPSVSKDVPDGPLLREETYDVPPAFAKPKPFDPTRHPLILAAPPPDSPAAEDVYDVPPPAPDLYDVPPGLRRPGPGTLYDVPRERVLPPEVADGSVVDDGVYAVPPPAEREAPTDGKRLSASSTGSTRSSQSASSLEVVVPGREPLELEVAVESLARLQQGVSTTVAHLLDLVGSASGPGGWRGTSEPQEPPAQDLKAAVAAVHGAVHELLEFARGAVSNATHTSDRTLHAKLSRQLQKMEDVYQTLVVHGQVLDSGRGSPGFTPEDLDRLVACSRAVPEDAKQLASFLHGNASLLFRRTKAPGPGPEGSSSLHPNPTDKASSIQSRPLPSPPKFTSQDSPDGQYENSEGGWMEDYDYVHLQGKEEFEKTQKELLERGNIMRQGKGQLELQQLKQFERLEQEVSRPIDHDLANWTPAQPLVPGRTGGLGPSDRQLLLFYLEQCEANLTTLTDAVDAFFTAVATNQPPKIFVAHSKFVILSAHKLVFIGDTLSRQAKAADVRSQVTHYSNLLCDLLRGIVATTKAAALQYPSPSAAQDMVDRVKELGHSTQQFRRVLGQLAAA.

At Met-1 the chain carries N-acetylmethionine. One can recognise an SH3 domain in the interval 3–65 (VPNVLAKALY…PGNRLKILVG (63 aa)). A disordered region spans residues 71-177 (PVGPGPGPPA…LYQVPPGPGS (107 aa)). Over residues 73-88 (GPGPGPPATPPQPQPS) the composition is skewed to pro residues. The interval 119-420 (YLVPTPSKTQ…DGVYAVPPPA (302 aa)) is substrate for kinases. Phosphotyrosine is present on Tyr-132. Over residues 139 to 155 (PQFQSPPAKQTSTFSKQ) the composition is skewed to polar residues. A Phosphoserine modification is found at Ser-143. Phosphotyrosine occurs at positions 238 and 253. At Thr-273 the chain carries Phosphothreonine. Residue Ser-296 is modified to Phosphoserine. Phosphotyrosine occurs at positions 366, 376, and 414. Positions 374-388 (DLYDVPPGLRRPGPG) are enriched in low complexity. Disordered regions lie at residues 374–394 (DLYD…YDVP), 409–450 (VDDG…SLEV), and 610–662 (RRTK…NSEG). Over residues 420 to 430 (AEREAPTDGKR) the composition is skewed to basic and acidic residues. The segment covering 431–448 (LSASSTGSTRSSQSASSL) has biased composition (low complexity). A phosphoserine mark is found at Ser-432, Ser-441, and Ser-643. Over residues 621 to 659 (GSSSLHPNPTDKASSIQSRPLPSPPKFTSQDSPDGQYEN) the composition is skewed to polar residues. An SH3-binding motif is present at residues 639 to 647 (RPLPSPPKF). Positions 750–800 (FYLEQCEANLTTLTDAVDAFFTAVATNQPPKIFVAHSKFVILSAHKLVFIG) are divergent helix-loop-helix motif.

This sequence belongs to the CAS family. Forms complexes in vivo with PTK2/FAK1, adapter protein CRKL and LYN kinase. Can heterodimerize with NEDD9. Component of a complex comprised of SH2D3C, BCAR1/CAS, and CRK. Within the complex, interacts with SH2D3C (via C-terminus), and CRK. Part of a complex comprised of PTPRA, BCAR1, BCAR3 (via SH2 domain) and SRC; the formation of the complex is dependent on integrin mediated-tyrosine phosphorylation of PTPRA. Interacts with BCAR3 (via Ras-GEF domain); the interaction regulates adhesion-dependent serine phosphorylation. Interacts with SMAD2 and SMAD3. Interacts with NPHP1. Interacts with PTK2B/PYK2. Interacts (via C-terminus) with SH2D3C/CHAT isoform 2 (via C-terminus). Interacts with activated CSPG4. Interacts with BMX, INPPL1/SHIP2 and PEAK1. Part of a collagen stimulated complex involved in cell migration composed of CDC42, CRK, TNK2 and BCAR1/p130cas. Interacts with TNK2 via SH3 domains. Interacts (when tyrosine-phosphorylated) with tensin TNS1; the interaction is increased by phosphorylation of TNS1. Post-translationally, PTK2/FAK1 activation mediates phosphorylation at the YDYVHL motif; phosphorylation is most likely catalyzed by SRC family members. SRC-family kinases are recruited to the phosphorylated sites and can phosphorylate other tyrosine residues. Tyrosine phosphorylation is triggered by integrin mediated adhesion of cells to the extracellular matrix. Dephosphorylated by PTPN14 at Tyr-132. In terms of processing, phosphorylated by SRC kinase in a EDN1- and PTK2B-mediated manner; phosphorylation strengthens its interaction with BCAR3 as part of the PTK2B/BCAR1/BCAR3/RAP1 signaling pathway. Expressed in olfactory sensory neurons (at protein level). Expressed abundantly in the liver, lung, brain, and at lower levels in the heart (at protein level).

The protein localises to the cell junction. It localises to the focal adhesion. It is found in the cytoplasm. Its subcellular location is the cell projection. The protein resides in the axon. In terms of biological role, docking protein which plays a central coordinating role for tyrosine kinase-based signaling related to cell adhesion. Implicated in induction of cell migration and cell branching. Involved in the BCAR3-mediated inhibition of TGFB signaling. This Mus musculus (Mouse) protein is Breast cancer anti-estrogen resistance protein 1 (Bcar1).